The primary structure comprises 281 residues: uncharacterized protein (281 aa).

The next 3 membrane-spanning stretches (helical) occupy residues 23 to 45 (LLLS…FFAA), 65 to 87 (IANF…ASLG), and 94 to 116 (TSVI…GSLS).

The protein belongs to the MscS (TC 1.A.23) family.

The protein localises to the cell membrane. This is an uncharacterized protein from Buchnera aphidicola subsp. Baizongia pistaciae (strain Bp).